Reading from the N-terminus, the 195-residue chain is ATP-dependent Clp protease proteolytic subunit (195 aa).

S99 serves as the catalytic Nucleophile. H124 is a catalytic residue.

The protein belongs to the peptidase S14 family. As to quaternary structure, fourteen ClpP subunits assemble into 2 heptameric rings which stack back to back to give a disk-like structure with a central cavity, resembling the structure of eukaryotic proteasomes.

It is found in the cytoplasm. The catalysed reaction is Hydrolysis of proteins to small peptides in the presence of ATP and magnesium. alpha-casein is the usual test substrate. In the absence of ATP, only oligopeptides shorter than five residues are hydrolyzed (such as succinyl-Leu-Tyr-|-NHMec, and Leu-Tyr-Leu-|-Tyr-Trp, in which cleavage of the -Tyr-|-Leu- and -Tyr-|-Trp bonds also occurs).. In terms of biological role, cleaves peptides in various proteins in a process that requires ATP hydrolysis. Has a chymotrypsin-like activity. Plays a major role in the degradation of misfolded proteins. The chain is ATP-dependent Clp protease proteolytic subunit from Coxiella burnetii (strain RSA 331 / Henzerling II).